Here is a 372-residue protein sequence, read N- to C-terminus: NAD(P)H-quinone oxidoreductase subunit 1 (372 aa).

Helical transmembrane passes span 29–49, 97–117, 130–150, 176–196, 204–224, 254–274, 308–328, and 347–367; these read WIPLPSFLMIIGATVGVLVVV, WLFTLGPVLVVLPVFVSYLIV, VGIFLWISLSSIAPIGLLMSG, LAFSVLAIAMMSNSLSTIDIV, ILGWNVWRQPVGLIIFWIAAL, FGLFYVGSYVNLVLSALVFAI, SLGITMTVLKAYFLVFIAVLL, and FLLPVSLVNLLLTAALKLAFP.

This sequence belongs to the complex I subunit 1 family. In terms of assembly, NDH-1 is composed of at least 11 different subunits.

The protein localises to the cellular thylakoid membrane. It carries out the reaction a plastoquinone + NADH + (n+1) H(+)(in) = a plastoquinol + NAD(+) + n H(+)(out). The enzyme catalyses a plastoquinone + NADPH + (n+1) H(+)(in) = a plastoquinol + NADP(+) + n H(+)(out). Functionally, NDH-1 shuttles electrons from an unknown electron donor, via FMN and iron-sulfur (Fe-S) centers, to quinones in the respiratory and/or the photosynthetic chain. The immediate electron acceptor for the enzyme in this species is believed to be plastoquinone. Couples the redox reaction to proton translocation, and thus conserves the redox energy in a proton gradient. This is NAD(P)H-quinone oxidoreductase subunit 1 from Rippkaea orientalis (strain PCC 8801 / RF-1) (Cyanothece sp. (strain PCC 8801)).